Consider the following 126-residue polypeptide: Probable S-adenosyl-L-methionine-binding protein MJ1583 (126 aa).

The region spanning 4 to 126 (LKPIGVVEQN…FSEKLDCPKI (123 aa)) is the TsaA-like domain. Residues 45–46 (HK), R75, and 106–109 (YNET) each bind S-adenosyl-L-methionine.

This sequence belongs to the tRNA methyltransferase O family.

This Methanocaldococcus jannaschii (strain ATCC 43067 / DSM 2661 / JAL-1 / JCM 10045 / NBRC 100440) (Methanococcus jannaschii) protein is Probable S-adenosyl-L-methionine-binding protein MJ1583.